We begin with the raw amino-acid sequence, 227 residues long: Probable 2-phosphosulfolactate phosphatase (227 aa).

It belongs to the ComB family. It depends on Mg(2+) as a cofactor.

The enzyme catalyses (2R)-O-phospho-3-sulfolactate + H2O = (2R)-3-sulfolactate + phosphate. The protein is Probable 2-phosphosulfolactate phosphatase of Thermotoga petrophila (strain ATCC BAA-488 / DSM 13995 / JCM 10881 / RKU-1).